We begin with the raw amino-acid sequence, 399 residues long: MPDPGWAARTPEANDLLLTAGTGVGTHLANQTAWTTLGASHHASGVASAINTAATAASWLGVGSAASALNVTMLNATLHGLAGWVDVKPAVVSTAIAAFETANAAMRPAPECMENRDEWGVDNAINPSVLWTLTPRIVSLDVEYFGVMWPNNAAVGATYGGVLAALAESLAIPPPVATMGASPAAPAQAAAAVGQAAAEAAAGDGMRSAYQGVQAGSTGAGQSTSAGENFGNQLSTFMQPMQAVMQAAPQALQAPSGLMQAPMSAMQPLQSMVGMFANPGALGMGGAAPGASAASAAGGISAAATEVGAGGGGAALGGGGMPATSFTRPVSAFESGTSGRPVGLRPSGALGADVVRAPTTTVGGTPIGGMPVGHAAGGHRGSHGKSEQAATVRVVDDRR.

Positions 375–399 (AAGGHRGSHGKSEQAATVRVVDDRR) are disordered.

The protein belongs to the mycobacterial PPE family.

This is an uncharacterized protein from Mycobacterium tuberculosis (strain ATCC 25618 / H37Rv).